Reading from the N-terminus, the 298-residue chain is Ribosomal protein L11 methyltransferase (298 aa).

S-adenosyl-L-methionine contacts are provided by Thr139, Gly163, Asp185, and Asn232.

It belongs to the methyltransferase superfamily. PrmA family.

The protein resides in the cytoplasm. It carries out the reaction L-lysyl-[protein] + 3 S-adenosyl-L-methionine = N(6),N(6),N(6)-trimethyl-L-lysyl-[protein] + 3 S-adenosyl-L-homocysteine + 3 H(+). In terms of biological role, methylates ribosomal protein L11. This is Ribosomal protein L11 methyltransferase from Gloeothece citriformis (strain PCC 7424) (Cyanothece sp. (strain PCC 7424)).